The sequence spans 603 residues: MVLRLSKLFLRTLREDPADAEVASHRLLVRAGYIRRAAPGIYTWLPLGLSVLRKVEKVIREEMAAIGAQEVHFPALLPKEPYEATNRWTEYGEGIFRLKDRKGGDYLLAPTHEEMFTLLVKDLYSSYKDLPLSIYQIQNKYRDEARPRAGLLRGREFIMKDSYSFDVDDAGLDASYNAHRAAYLKIFERLGLEVIPVAATAGAMGGSRSEEFLHPTEIGEDTFVRSAGGYAANVEAVTTVVPAEIDFSNAPAAEIRDTPNTPTIDTLVDAANQLVPRDENDGGAWTAADTLKNVVLAVTLPTGERQIVVIGVPGDRGVDLKRVEANIGAYLPVAGEITVEAAGEEDLARNPLIVRGYLGPGMSLGTPLLGLEGAAKLLYLVDPRVVKGTAWVTGANMAGKHVFGLVAGRDFGWDGVIECTEVRAGDEAPDGSGPLETARGIEMGHIFQLGRKYAEALELKVLDQNGKQVVVTMGSYGVGVTRAVAALAESNHDAKGLVWPRAVAPADVHVVAVGRGEEIFAAAEQLSLELEAAGLEVIYDDRPKVSPGVKFGDAELIGVPTILAVGRGLVDGVVEIKDRRSGEAENVAVEKAVDYVVNAVRSK.

It belongs to the class-II aminoacyl-tRNA synthetase family. ProS type 1 subfamily. As to quaternary structure, homodimer.

Its subcellular location is the cytoplasm. The catalysed reaction is tRNA(Pro) + L-proline + ATP = L-prolyl-tRNA(Pro) + AMP + diphosphate. Functionally, catalyzes the attachment of proline to tRNA(Pro) in a two-step reaction: proline is first activated by ATP to form Pro-AMP and then transferred to the acceptor end of tRNA(Pro). As ProRS can inadvertently accommodate and process non-cognate amino acids such as alanine and cysteine, to avoid such errors it has two additional distinct editing activities against alanine. One activity is designated as 'pretransfer' editing and involves the tRNA(Pro)-independent hydrolysis of activated Ala-AMP. The other activity is designated 'posttransfer' editing and involves deacylation of mischarged Ala-tRNA(Pro). The misacylated Cys-tRNA(Pro) is not edited by ProRS. The protein is Proline--tRNA ligase of Arthrobacter sp. (strain FB24).